The chain runs to 97 residues: Large ribosomal subunit protein bL28 (97 aa).

Belongs to the bacterial ribosomal protein bL28 family.

This chain is Large ribosomal subunit protein bL28, found in Rickettsia bellii (strain OSU 85-389).